Consider the following 277-residue polypeptide: Anamorsin homolog 2 (277 aa).

The segment at methionine 1–serine 141 is N-terminal SAM-like domain. The segment at serine 141 to leucine 186 is linker. 4 residues coordinate [2Fe-2S] cluster: cysteine 197, cysteine 207, cysteine 210, and cysteine 212. The fe-S binding site A stretch occupies residues cysteine 197–cysteine 212. [4Fe-4S] cluster-binding residues include cysteine 238, cysteine 241, cysteine 249, and cysteine 252. 2 short sequence motifs (cx2C motif) span residues cysteine 238–cysteine 241 and cysteine 249–cysteine 252. Residues cysteine 238–cysteine 252 form a fe-S binding site B region.

It belongs to the anamorsin family. As to quaternary structure, monomer. [2Fe-2S] cluster is required as a cofactor. [4Fe-4S] cluster serves as cofactor.

Its subcellular location is the cytoplasm. The protein resides in the mitochondrion intermembrane space. Functionally, component of the cytosolic iron-sulfur (Fe-S) protein assembly (CIA) machinery. Required for the maturation of extramitochondrial Fe-S proteins. Part of an electron transfer chain functioning in an early step of cytosolic Fe-S biogenesis, facilitating the de novo assembly of a [4Fe-4S] cluster on the cytosolic Fe-S scaffold complex. Electrons are transferred from NADPH via a FAD- and FMN-containing diflavin oxidoreductase. Together with the diflavin oxidoreductase, also required for the assembly of the diferric tyrosyl radical cofactor of ribonucleotide reductase (RNR), probably by providing electrons for reduction during radical cofactor maturation in the catalytic small subunit. This chain is Anamorsin homolog 2, found in Picea sitchensis (Sitka spruce).